The sequence spans 469 residues: Transcription factor E2FB (469 aa).

2 disordered regions span residues 1–28 (MSEE…PPLV) and 84–118 (QTPV…AGSP). Composition is skewed to polar residues over residues 8 to 22 (QFPS…SLSS) and 100 to 118 (SAKS…AGSP). A DNA-binding region spans residues 129-194 (RYDSSLGLLT…TLKNRIQWKG (66 aa)). The stretch at 202 to 246 (ETIESIANLQDEVQNLAAEEARLDDQIRESQERLTSLSEDENNKR) forms a coiled coil. Residues 210 to 238 (LQDEVQNLAAEEARLDDQIRESQERLTSL) are leucine-zipper. Positions 319–374 (PQADEPSNVPDEPSNVPDVPSNLPSTSGLPENHDVSMPMKEESTERNMETQEVDDT) are disordered. The segment covering 349-374 (ENHDVSMPMKEESTERNMETQEVDDT) has biased composition (basic and acidic residues). The retinoblastoma protein binding stretch occupies residues 403-419 (DYWFRSEVGEVSITDMW). The disordered stretch occupies residues 426–469 (DWNQMITFDQDHAGPSDNKILEQPQTPSSPTPEESTATRSPTGS). Residues 447–469 (EQPQTPSSPTPEESTATRSPTGS) show a composition bias toward low complexity.

It belongs to the E2F/DP family. Heterodimer with DP proteins. Interacts (via dimerization domain) preferentially with DPA, but also with DPB. Interacts with PURA1 and retinoblastoma-related protein RBR1. Component of a DREAM-like complex which modulates a variety of developmentally regulated genes and of the mitotic genes in proliferating and differentiated cells. Interacts with MYB3R4 only at early stages of leaves development. In terms of processing, phosphorylated. Expressed in proliferating cells and several differentiated tissues. Detected in inflorescence and shoot apical meristems, cotyledonary vascular tissues, leaf primordia, young leaves, base of trichomes, central cylinder and elongation zone of roots, lateral root primordia, flowers, pistils of immature flowers and pollen grains.

The protein localises to the cytoplasm. It is found in the nucleus. Its function is as follows. Transcription activator that binds DNA cooperatively with DP proteins through the E2 recognition site, 5'-TTTC[CG]CGC-3' found in the promoter region of a number of genes whose products are involved in cell cycle regulation or in DNA replication. The binding of retinoblastoma-related proteins represses transactivation. Involved in the control of cell-cycle progression from G1 to S phase and from G2 to M phase. Stimulates cell proliferation and delays differentiation. Represses cell enlargement and endoreduplication in auxin-free conditions. The polypeptide is Transcription factor E2FB (E2FB) (Arabidopsis thaliana (Mouse-ear cress)).